A 178-amino-acid polypeptide reads, in one-letter code: Adenine phosphoribosyltransferase (178 aa).

It belongs to the purine/pyrimidine phosphoribosyltransferase family. As to quaternary structure, homodimer.

It is found in the cytoplasm. It catalyses the reaction AMP + diphosphate = 5-phospho-alpha-D-ribose 1-diphosphate + adenine. The protein operates within purine metabolism; AMP biosynthesis via salvage pathway; AMP from adenine: step 1/1. Its function is as follows. Catalyzes a salvage reaction resulting in the formation of AMP, that is energically less costly than de novo synthesis. The chain is Adenine phosphoribosyltransferase from Mycoplasmoides gallisepticum (strain R(low / passage 15 / clone 2)) (Mycoplasma gallisepticum).